A 91-amino-acid chain; its full sequence is Small ribosomal subunit protein uS15c (91 aa).

Belongs to the universal ribosomal protein uS15 family. As to quaternary structure, part of the 30S ribosomal subunit.

Its subcellular location is the plastid. It is found in the chloroplast. The polypeptide is Small ribosomal subunit protein uS15c (rps15) (Ceratophyllum demersum (Rigid hornwort)).